The following is a 254-amino-acid chain: tRNA uridine(34) hydroxylase (254 aa).

One can recognise a Rhodanese domain in the interval 123 to 217 (QDPNVILLDT…YLESIPESES (95 aa)). Catalysis depends on cysteine 177, which acts as the Cysteine persulfide intermediate.

Belongs to the TrhO family.

The catalysed reaction is uridine(34) in tRNA + AH2 + O2 = 5-hydroxyuridine(34) in tRNA + A + H2O. Its function is as follows. Catalyzes oxygen-dependent 5-hydroxyuridine (ho5U) modification at position 34 in tRNAs. This Legionella pneumophila (strain Corby) protein is tRNA uridine(34) hydroxylase.